Reading from the N-terminus, the 382-residue chain is Dual-specificity RNA methyltransferase RlmN (382 aa).

Residue Glu-113 is the Proton acceptor of the active site. A Radical SAM core domain is found at 119-358 (EINRATLCIS…TTIRKQRGID (240 aa)). An intrachain disulfide couples Cys-126 to Cys-363. 3 residues coordinate [4Fe-4S] cluster: Cys-133, Cys-137, and Cys-140. Residues 187-188 (GE), Ser-219, 241-243 (SLH), and Asn-320 contribute to the S-adenosyl-L-methionine site. Catalysis depends on Cys-363, which acts as the S-methylcysteine intermediate.

Belongs to the radical SAM superfamily. RlmN family. It depends on [4Fe-4S] cluster as a cofactor.

The protein localises to the cytoplasm. It carries out the reaction adenosine(2503) in 23S rRNA + 2 reduced [2Fe-2S]-[ferredoxin] + 2 S-adenosyl-L-methionine = 2-methyladenosine(2503) in 23S rRNA + 5'-deoxyadenosine + L-methionine + 2 oxidized [2Fe-2S]-[ferredoxin] + S-adenosyl-L-homocysteine. It catalyses the reaction adenosine(37) in tRNA + 2 reduced [2Fe-2S]-[ferredoxin] + 2 S-adenosyl-L-methionine = 2-methyladenosine(37) in tRNA + 5'-deoxyadenosine + L-methionine + 2 oxidized [2Fe-2S]-[ferredoxin] + S-adenosyl-L-homocysteine. Its function is as follows. Specifically methylates position 2 of adenine 2503 in 23S rRNA and position 2 of adenine 37 in tRNAs. m2A2503 modification seems to play a crucial role in the proofreading step occurring at the peptidyl transferase center and thus would serve to optimize ribosomal fidelity. The chain is Dual-specificity RNA methyltransferase RlmN from Wigglesworthia glossinidia brevipalpis.